The chain runs to 334 residues: Large ribosomal subunit protein uL3 (334 aa).

Positions 1 to 10 are enriched in basic residues; sequence MGMKKSRPRR. The interval 1-20 is disordered; sequence MGMKKSRPRRGSLAFSPRKR.

The protein belongs to the universal ribosomal protein uL3 family. As to quaternary structure, part of the 50S ribosomal subunit. Forms a cluster with proteins L14 and L24e.

One of the primary rRNA binding proteins, it binds directly near the 3'-end of the 23S rRNA, where it nucleates assembly of the 50S subunit. The chain is Large ribosomal subunit protein uL3 from Methanococcus maripaludis (strain C7 / ATCC BAA-1331).